The primary structure comprises 318 residues: 1-aminocyclopropane-1-carboxylate oxidase (318 aa).

The Fe2OG dioxygenase domain maps to 151–251 (PTFGTKVSNY…RMSIASFYNP (101 aa)). Residues His-175, Asp-177, and His-232 each coordinate Fe cation.

This sequence belongs to the iron/ascorbate-dependent oxidoreductase family. The cofactor is Fe cation.

It carries out the reaction 1-aminocyclopropane-1-carboxylate + L-ascorbate + O2 = ethene + L-dehydroascorbate + hydrogen cyanide + CO2 + 2 H2O. Its pathway is alkene biosynthesis; ethylene biosynthesis via S-adenosyl-L-methionine; ethylene from S-adenosyl-L-methionine: step 2/2. This chain is 1-aminocyclopropane-1-carboxylate oxidase (ACO), found in Dendrobium crumenatum (Tropical pigeon orchid).